The sequence spans 85 residues: Translation initiation factor IF-1 1 (85 aa).

Positions 1–72 (MAKEELIEMS…SKGRITFRHL (72 aa)) constitute an S1-like domain.

Belongs to the IF-1 family. As to quaternary structure, component of the 30S ribosomal translation pre-initiation complex which assembles on the 30S ribosome in the order IF-2 and IF-3, IF-1 and N-formylmethionyl-tRNA(fMet); mRNA recruitment can occur at any time during PIC assembly.

It localises to the cytoplasm. One of the essential components for the initiation of protein synthesis. Stabilizes the binding of IF-2 and IF-3 on the 30S subunit to which N-formylmethionyl-tRNA(fMet) subsequently binds. Helps modulate mRNA selection, yielding the 30S pre-initiation complex (PIC). Upon addition of the 50S ribosomal subunit IF-1, IF-2 and IF-3 are released leaving the mature 70S translation initiation complex. The polypeptide is Translation initiation factor IF-1 1 (Aromatoleum aromaticum (strain DSM 19018 / LMG 30748 / EbN1) (Azoarcus sp. (strain EbN1))).